The chain runs to 675 residues: MQRKDALKEIARLRDELNRHNYRYYVLAQPEISDYAFDQELERLIALEKAFPDLVTPDSPSQRVGGEITKEFPTVTHRQPMRSLSNTYSLEEVEEFYARVLKLLPEEAGENPEFVAELKFDGVAVSLLYRDGFLVQGATRGNGVEGDDITPNIRTIGSVPLQLRGGAAMAAEQYGGREIEVRGEVFMRKDDFAALNEGRPEEEQFANPRNATAGTLKLQDSAEVARRKMMFVAYYLTDPQCRSMQHVQRLQRLEEMGFYTGGHYSTCRSFDEIRDFIGRWEVDRLTLQYDIDGIVLKLNNPAFWDELGATSKSPRWAIAYKYPAEQAETVLNDVVFQVGRLGTITPVAELEAVRLAGTTVKRSTLHNFDEIRRLDVRIGDRVVIEKSGEIIPKVIRVVPGTRREDSSEIAIPSHCPVCGTALLHPENEVSWYCPNSQSCPAQVKARILHFASRNAMDIKSLGESLVEQLVHNGLVADSGDLYRLTADEVSHLDRMADKSAMNLLKAIEKSRTREYERVLYALGIRHVGLATARELAAAYHSIDLLASAALEELSCVADIGPVIAQSVHDFFRNPDALALVEKLRTAGLRLAASAPKALVNRNFEGMKVIFTGTLERHSRDDAAALVAQRGGKEVKSLSRKTDLVVAGKDPGSKLQKALKLGVRVIGEEEFEAMLF.

Residues 34–38 (DYAFD), 83–84 (SL), and Glu117 each bind NAD(+). Lys119 serves as the catalytic N6-AMP-lysine intermediate. Arg140, Glu184, Lys297, and Lys321 together coordinate NAD(+). Positions 415, 418, 433, and 439 each coordinate Zn(2+). A BRCT domain is found at 598 to 675 (LVNRNFEGMK…GEEEFEAMLF (78 aa)).

The protein belongs to the NAD-dependent DNA ligase family. LigA subfamily. Mg(2+) serves as cofactor. Mn(2+) is required as a cofactor.

The enzyme catalyses NAD(+) + (deoxyribonucleotide)n-3'-hydroxyl + 5'-phospho-(deoxyribonucleotide)m = (deoxyribonucleotide)n+m + AMP + beta-nicotinamide D-nucleotide.. Functionally, DNA ligase that catalyzes the formation of phosphodiester linkages between 5'-phosphoryl and 3'-hydroxyl groups in double-stranded DNA using NAD as a coenzyme and as the energy source for the reaction. It is essential for DNA replication and repair of damaged DNA. The protein is DNA ligase of Prosthecochloris aestuarii (strain DSM 271 / SK 413).